Here is a 410-residue protein sequence, read N- to C-terminus: Arginine deiminase (410 aa).

Residue Cys400 is the Amidino-cysteine intermediate of the active site.

Belongs to the arginine deiminase family.

Its subcellular location is the cytoplasm. The catalysed reaction is L-arginine + H2O = L-citrulline + NH4(+). It functions in the pathway amino-acid degradation; L-arginine degradation via ADI pathway; carbamoyl phosphate from L-arginine: step 1/2. The polypeptide is Arginine deiminase (Streptococcus agalactiae serotype Ia (strain ATCC 27591 / A909 / CDC SS700)).